Consider the following 118-residue polypeptide: Cysteine--tRNA ligase (118 aa).

Residue Cys28 participates in Zn(2+) binding. The 'HIGH' region signature appears at 30–40 (PTVYNYIHIGN).

This sequence belongs to the class-I aminoacyl-tRNA synthetase family. As to quaternary structure, monomer. Zn(2+) is required as a cofactor.

It is found in the cytoplasm. The enzyme catalyses tRNA(Cys) + L-cysteine + ATP = L-cysteinyl-tRNA(Cys) + AMP + diphosphate. The protein is Cysteine--tRNA ligase (cysS) of Staphylococcus xylosus.